A 420-amino-acid polypeptide reads, in one-letter code: Phosphoglycerate kinase (420 aa).

Residues Val-26, Asp-27, Tyr-28, Asn-29, Gln-42, Arg-43, Ser-66, His-67, Gly-69, Arg-70, Leu-125, Arg-126, His-173, and Arg-174 each coordinate (2R)-3-phosphoglycerate. Residue Tyr-199 is modified to Phosphotyrosine. Ser-206 is modified (phosphoserine). Positions 209–228 (KPFLAILGGAKVSDKIKLIE) are calmodulin binding. Residue Gly-217 coordinates ADP. Gly-217 contributes to the CDP binding site. AMP is bound by residues Ala-218 and Lys-219. Ala-218 lines the ATP pocket. Ala-218 is a Mg(2+) binding site. Asp-222 contributes to the CDP binding site. Asp-222 serves as a coordination point for Mg(2+). Lys-223 is an AMP binding site. Lys-223 provides a ligand contact to ATP. Residue Gly-241 coordinates ADP. CDP is bound at residue Gly-241. Residues Gly-242 and Gly-316 each contribute to the AMP site. The ATP site is built by Gly-242 and Gly-316. CDP-binding residues include Gly-341 and Phe-346. ADP is bound at residue Phe-346. Glu-347 lines the AMP pocket. ATP is bound by residues Glu-347, Asp-378, and Thr-379. A Mg(2+)-binding site is contributed by Asp-378. Ser-393 carries the post-translational modification Phosphoserine.

This sequence belongs to the phosphoglycerate kinase family. As to quaternary structure, monomer. Interacts with calmodulin in the presence of Ca(2+). Mg(2+) serves as cofactor.

Its subcellular location is the cytoplasm. The catalysed reaction is (2R)-3-phosphoglycerate + ATP = (2R)-3-phospho-glyceroyl phosphate + ADP. The protein operates within carbohydrate degradation; glycolysis; pyruvate from D-glyceraldehyde 3-phosphate: step 2/5. In Dictyostelium discoideum (Social amoeba), this protein is Phosphoglycerate kinase.